A 168-amino-acid chain; its full sequence is UPF0478 protein SH1183 (168 aa).

Residues 7 to 27 form a helical membrane-spanning segment; that stretch reads IAGIIAAIAFLVLCIGIVVVL. The segment at 144 to 168 is disordered; the sequence is YRNTSVGNDANHSNENYTTNVEKNF.

The protein belongs to the UPF0478 family.

The protein resides in the cell membrane. In Staphylococcus haemolyticus (strain JCSC1435), this protein is UPF0478 protein SH1183.